Here is a 208-residue protein sequence, read N- to C-terminus: MSKSYTLKAELRERVGKGSSRELRRNGFIPAVIYGDKQPPLAIAVSYKEIFYKIYAGGFRTTVATIAVGQQKIMVLPKDYQLDPVRDFPIHVDFLRVSAQSVVEVSIPVHFFNEDTAPGLKKGGVLNIVRHEIECIAPANAIPEAIEIDLSNYSIGDSIHISVVKLPKDVTPVIQDRDFTIATIAAPAGMNVSDDSSEQESDKDNAKT.

Belongs to the bacterial ribosomal protein bL25 family. CTC subfamily. As to quaternary structure, part of the 50S ribosomal subunit; part of the 5S rRNA/L5/L18/L25 subcomplex. Contacts the 5S rRNA. Binds to the 5S rRNA independently of L5 and L18.

Its function is as follows. This is one of the proteins that binds to the 5S RNA in the ribosome where it forms part of the central protuberance. This chain is Large ribosomal subunit protein bL25, found in Bartonella quintana (strain Toulouse) (Rochalimaea quintana).